The chain runs to 322 residues: Phthalate dioxygenase reductase (322 aa).

Residues 7–109 enclose the FAD-binding FR-type domain; sequence DGFLRLKIAS…SLPRNEFPLD (103 aa). FMN is bound by residues 56–57, 73–75, 81–84, Thr125, and Phe226; these read RT, AVK, and RGGS. The 2Fe-2S ferredoxin-type domain occupies 239–322; sequence FTVRLSRSGT…AKSAELVLDL (84 aa). Cys273 serves as a coordination point for [2Fe-2S] cluster. Position 275 (Ser275) interacts with FMN. [2Fe-2S] cluster-binding residues include Cys278, Cys281, and Cys309.

The protein belongs to the PDR/VanB family. Monomer. Requires FMN as cofactor.

Its function is as follows. Component of the electron transfer chain involved in pyridine nucleotide-dependent dihydroxylation of phthalate. Utilizes FMN to mediate electron transfer from the two-electron donor, NADH, to the one-electron acceptor, (2Fe-2S). The polypeptide is Phthalate dioxygenase reductase (ophA1) (Burkholderia cepacia (Pseudomonas cepacia)).